A 780-amino-acid polypeptide reads, in one-letter code: Lethal(3)malignant brain tumor-like protein 3 (780 aa).

Residues 1–64 (MTESASSTSG…VKKATATTTW (64 aa)) form an interaction with RBPJ. Required for transcription repressor activity on Notch target genes region. A disordered region spans residues 149–220 (DKDQKEERDV…RKRRGDSAVL (72 aa)). Acidic residues-rich tracts occupy residues 157 to 166 (DVEEDNEEED) and 185 to 194 (EDGEERDDEM). 3 MBT repeats span residues 232–332 (WCWA…LHPP), 340–439 (FNWQ…LITP), and 448–543 (FSWD…LQPP). The CCHHC-type; degenerate zinc finger occupies 549 to 593 (LMEASEHGGCSTPGCKGIGHFKRARHLGPHSAANCPYSEINLNKD). A disordered region spans residues 597 to 665 (PDRLSGEMPP…GAREEPTVQQ (69 aa)). Positions 600–710 (LSGEMPPASP…PASKVSKWST (111 aa)) are interaction with DCAF5. Ser608 carries the post-translational modification Phosphoserine. Lys637 participates in a covalent cross-link: Glycyl lysine isopeptide (Lys-Gly) (interchain with G-Cter in SUMO2). Residues 643-661 (RTESEMRTSHEARGAREEP) show a composition bias toward basic and acidic residues. Lys704 is covalently cross-linked (Glycyl lysine isopeptide (Lys-Gly) (interchain with G-Cter in SUMO2)). In terms of domain architecture, SAM spans 708–772 (WSTDEVSEFI…FNSILMFKAA (65 aa)).

Interacts with RNF2. Interacts (via SAM domain) with SAMD1 (via SAM domain); the interaction mediates L3MBTL3 binding to chromatin. Interacts with RBPJ; the interaction is required for L3MBTL3 localization to chromatin and is impaired by Notch-derived peptides containing the intracellular domain (NICD). Interacts (via SAM domain) with KDM1A. Interacts with DCAF5. Interacts with DNMT1. Interacts with E2F1. Interacts with SOX2. Interacts with SFMBT1.

The protein localises to the nucleus. In terms of biological role, is a negative regulator of Notch target genes expression, required for RBPJ-mediated transcriptional repression. It recruits KDM1A to Notch-responsive elements and promotes KDM1A-mediated H3K4me demethylation. Involved in the regulation of ubiquitin-dependent degradation of a set of methylated non-histone proteins, including SOX2, DNMT1 and E2F1. It acts as an adapter recruiting the CRL4-DCAF5 E3 ubiquitin ligase complex to methylated target proteins. Required for normal maturation of myeloid progenitor cells. In Homo sapiens (Human), this protein is Lethal(3)malignant brain tumor-like protein 3.